A 3198-amino-acid polypeptide reads, in one-letter code: Helicase domino (3198 aa).

Gly residues predominate over residues 1-12 (MNEGNSAGGGHE). Disordered stretches follow at residues 1–27 (MNEGNSAGGGHEGLSPAPPAVPDRVTP), 93–112 (LPQQQQQTAEATAAAAAPAH), and 119–148 (SSTIEASVLPPQAKRQRLDDNEDRTSAASI). Residues 134-143 (QRLDDNEDRT) are compositionally biased toward basic and acidic residues. A coiled-coil region spans residues 187–212 (KKRILQQKLQILRNLKERHLENVSEY). Disordered regions lie at residues 256–350 (TSAA…SATS) and 391–474 (GGTP…TPNS). Polar residues-rich tracts occupy residues 264–281 (QNQKYTTQQTDSVESSLV) and 297–329 (NISNSTVKTNTQSQVPSKIGSFTESTPAATESN). Residues 330–350 (SSTTVPGTATSGAATSTSATS) are compositionally biased toward low complexity. Over residues 391–404 (GGTPLLPCNTSAGS) the composition is skewed to polar residues. Over residues 452-464 (PGTPTSGSLLSPA) the composition is skewed to low complexity. Residues 507-579 (LPKLQEPSRP…QELQLKRVAS (73 aa)) form the HSA domain. The tract at residues 635–848 (NKSVADTPSL…DMEEQDEQED (214 aa)) is disordered. Polar residues predominate over residues 638–650 (VADTPSLNSSRLT). Residues 652–664 (PKRESDDDFRPES) are compositionally biased toward basic and acidic residues. Phosphoserine is present on residues Ser-656, Ser-664, and Ser-666. A coiled-coil region spans residues 666 to 696 (SEDDEETIAKAEEDAADVKEEVTALAKESEM). 2 stretches are compositionally biased toward basic and acidic residues: residues 672-695 (TIAKAEEDAADVKEEVTALAKESE) and 711-721 (ENRDKLMKEEQ). At Thr-729 the chain carries Phosphothreonine. 3 positions are modified to phosphoserine: Ser-733, Ser-736, and Ser-744. Positions 741–784 (KEASDDDENTISKQEEAEQEIDHKKEIDELEADNDLSVEQLLAK) form a coiled coil. Residues 753 to 767 (KQEEAEQEIDHKKEI) are compositionally biased toward basic and acidic residues. Acidic residues predominate over residues 805 to 831 (LDSDDDSTAVDSTEESEDAATEDEEDL). Thr-838 is modified (phosphothreonine). A Helicase ATP-binding domain is found at 926 to 1091 (VTMNERKLNG…WSLMHFLMPY (166 aa)). 939 to 946 (DEMGLGKT) contacts ATP. A disordered region spans residues 1471-1492 (VQKQSIANGKTEPEEETEAEDP). In terms of domain architecture, Helicase C-terminal spans 1662–1812 (TMDRLLRQLK…DMAIEGGNFT (151 aa)). Residues 1828–1856 (EQSEQDESSQEKSENKDRIVATTTLSDTP) are disordered. A compositionally biased stretch (basic and acidic residues) spans 1836 to 1846 (SQEKSENKDRI). The stretch at 1951 to 1996 (AAWTAEQLRAAEAELEAQKREWEANRLAAMHKEEELLKQETEAEEM) forms a coiled coil. Positions 2061 to 2100 (KEHKRSRTDAGYDGSRRPNKMRREDNYVPPRSLFDRPTPQ) are disordered. The span at 2067–2086 (RTDAGYDGSRRPNKMRREDN) shows a compositional bias: basic and acidic residues. Residues 2136-2205 (TEPEAMAEWC…QCRWRYETHI (70 aa)) enclose the Myb-like domain. The tract at residues 2318–2362 (IREKQRGQQMSQPPVGVGVVQQMQQQSQQQQQPAPPPLPQQQQPQ) is disordered. Positions 2325–2349 (QQMSQPPVGVGVVQQMQQQSQQQQQ) are enriched in low complexity.

The protein belongs to the SNF2/RAD54 helicase family. SWR1 subfamily. As to quaternary structure, component of the Tip60 chromatin-remodeling complex which contains Domino, Tip60, Tra1, Brd8, E(Pc), DMAP1, Pontin, Reptin, Ing3, Act87E, BAP55, Mrg15, MrgBP, Gas41 and YL-1. As to expression, isoform B is present at high levels in ovary, in follicle cells, nurse cells and oocyte. Isoform B is also present in germline and somatic stem cells from the germarium. Isoform A is undetectable in adult ovary (at protein level).

It localises to the nucleus. In terms of biological role, mediates the ATP-dependent exchange of unmodified histone H2AV for its phosphorylated and acetylated form H2AVK5acS138ph, leading to transcriptional regulation of selected genes by chromatin remodeling. Involved in Notch signaling. Represses E2F target genes. Required for somatic stem cell self-renewal but not for germline stem cell self-renewal. Involved in oogenesis. This Drosophila melanogaster (Fruit fly) protein is Helicase domino (dom).